A 792-amino-acid polypeptide reads, in one-letter code: Coiled-coil domain-containing protein R3HCC1L (792 aa).

The EJC-binding motif; may mediate interaction with the EJC stretch occupies residues 7-27; that stretch reads RCRVRARRPDMALYVPKARRG. Disordered stretches follow at residues 32–61 and 527–567; these read KTGDEEESCGSPNSVVKEKQKESSLSQKEV and EFKT…TSHT. Ser-688 bears the Phosphoserine mark. Thr-712 carries the phosphothreonine modification. Residues 751–783 are a coiled coil; sequence RSKQSKTEREAELKKLQEARERKRLEAKQREDI. The disordered stretch occupies residues 772–792; sequence RKRLEAKQREDIWEGRDQSTV.

May interact with the exon junction complex (EJC) composed at least of CASC3, EIF4A3, MAGOH and RBM8A. Expressed in placenta.

This is Coiled-coil domain-containing protein R3HCC1L (R3HCC1L) from Homo sapiens (Human).